Here is a 392-residue protein sequence, read N- to C-terminus: Nicotinate phosphoribosyltransferase (392 aa).

His214 carries the post-translational modification Phosphohistidine; by autocatalysis.

The protein belongs to the NAPRTase family. In terms of processing, transiently phosphorylated on a His residue during the reaction cycle. Phosphorylation strongly increases the affinity for substrates and increases the rate of nicotinate D-ribonucleotide production. Dephosphorylation regenerates the low-affinity form of the enzyme, leading to product release.

It carries out the reaction nicotinate + 5-phospho-alpha-D-ribose 1-diphosphate + ATP + H2O = nicotinate beta-D-ribonucleotide + ADP + phosphate + diphosphate. The protein operates within cofactor biosynthesis; NAD(+) biosynthesis; nicotinate D-ribonucleotide from nicotinate: step 1/1. Functionally, catalyzes the synthesis of beta-nicotinate D-ribonucleotide from nicotinate and 5-phospho-D-ribose 1-phosphate at the expense of ATP. The chain is Nicotinate phosphoribosyltransferase from Xanthomonas euvesicatoria pv. vesicatoria (strain 85-10) (Xanthomonas campestris pv. vesicatoria).